The following is a 367-amino-acid chain: Biotin synthase (367 aa).

Residues 67-291 (NAVQISTLLS…IAVTRICCPS (225 aa)) form the Radical SAM core domain. The [4Fe-4S] cluster site is built by cysteine 82, cysteine 86, and cysteine 89. 4 residues coordinate [2Fe-2S] cluster: cysteine 128, cysteine 159, cysteine 219, and arginine 295.

Belongs to the radical SAM superfamily. Biotin synthase family. As to quaternary structure, homodimer. [4Fe-4S] cluster is required as a cofactor. [2Fe-2S] cluster serves as cofactor.

The enzyme catalyses (4R,5S)-dethiobiotin + (sulfur carrier)-SH + 2 reduced [2Fe-2S]-[ferredoxin] + 2 S-adenosyl-L-methionine = (sulfur carrier)-H + biotin + 2 5'-deoxyadenosine + 2 L-methionine + 2 oxidized [2Fe-2S]-[ferredoxin]. It functions in the pathway cofactor biosynthesis; biotin biosynthesis; biotin from 7,8-diaminononanoate: step 2/2. In terms of biological role, catalyzes the conversion of dethiobiotin (DTB) to biotin by the insertion of a sulfur atom into dethiobiotin via a radical-based mechanism. The protein is Biotin synthase of Psychrobacter sp. (strain PRwf-1).